The sequence spans 260 residues: Rhythmically expressed gene 2 protein (260 aa).

This is Rhythmically expressed gene 2 protein (Reg-2) from Drosophila melanogaster (Fruit fly).